Consider the following 674-residue polypeptide: Tripartite terminase subunit 3 (674 aa).

The short motif at 212–219 is the Walker A motif element; sequence VPRRHGKT. Residues 305-310 carry the Walker B motif motif; that stretch reads LLLVDE. The active-site For ATPase activity is glutamate 310. Residues aspartate 463 and glutamate 534 each act as for nuclease activity in the active site. A required for interaction with UL56 and DNA packaging region spans residues 580 to 600; the sequence is GRDKALAVEQFISRFNSGYIK. Aspartate 651 (for nuclease activity) is an active-site residue.

This sequence belongs to the herpesviridae TRM3 protein family. As to quaternary structure, interacts with the terminase subunits TRM1 and TRM2. Interacts with portal protein.

Its subcellular location is the host nucleus. Component of the molecular motor that translocates viral genomic DNA in empty capsid during DNA packaging. Forms a tripartite terminase complex together with TRM1 and TRM2 in the host cytoplasm. Once the complex reaches the host nucleus, it interacts with the capsid portal vertex. This portal forms a ring in which genomic DNA is translocated into the capsid. TRM3 carries an RNase H-like nuclease activity that plays an important role for the cleavage of concatemeric viral DNA into unit length genomes. The sequence is that of Tripartite terminase subunit 3 from Homo sapiens (Human).